A 105-amino-acid polypeptide reads, in one-letter code: uncharacterized protein (105 aa).

A helical transmembrane segment spans residues 8–28 (FMTAGIIIALIIAVLAPFLAS). The tract at residues 32 to 53 (DGLESTAEKVMPNPETEPVLES) is disordered. Residues 72-92 (VSMVIGTILVLAIAYGVGAVF) traverse the membrane as a helical segment.

To M.jannaschii MJ1570.

It is found in the cell membrane. This is an uncharacterized protein from Methanothermobacter thermautotrophicus (strain ATCC 29096 / DSM 1053 / JCM 10044 / NBRC 100330 / Delta H) (Methanobacterium thermoautotrophicum).